Here is a 327-residue protein sequence, read N- to C-terminus: DNA-directed RNA polymerase subunit alpha (327 aa).

The tract at residues 1-231 (MIYQMQMPAK…DHIMYFANFS (231 aa)) is alpha N-terminal domain (alpha-NTD). Residues 247–327 (DEFESMRKLL…GMDITRYQMK (81 aa)) are alpha C-terminal domain (alpha-CTD).

This sequence belongs to the RNA polymerase alpha chain family. In terms of assembly, homodimer. The RNAP catalytic core consists of 2 alpha, 1 beta, 1 beta' and 1 omega subunit. When a sigma factor is associated with the core the holoenzyme is formed, which can initiate transcription.

The catalysed reaction is RNA(n) + a ribonucleoside 5'-triphosphate = RNA(n+1) + diphosphate. Its function is as follows. DNA-dependent RNA polymerase catalyzes the transcription of DNA into RNA using the four ribonucleoside triphosphates as substrates. This is DNA-directed RNA polymerase subunit alpha from Chlorobium phaeobacteroides (strain DSM 266 / SMG 266 / 2430).